Consider the following 208-residue polypeptide: Uracil phosphoribosyltransferase (208 aa).

Residues Arg-78, Arg-103, and 130-138 contribute to the 5-phospho-alpha-D-ribose 1-diphosphate site; that span reads DPMLATGGT. Residues Ile-193 and 198–200 each bind uracil; that span reads GDA. Asp-199 serves as a coordination point for 5-phospho-alpha-D-ribose 1-diphosphate.

The protein belongs to the UPRTase family. Requires Mg(2+) as cofactor.

The enzyme catalyses UMP + diphosphate = 5-phospho-alpha-D-ribose 1-diphosphate + uracil. It participates in pyrimidine metabolism; UMP biosynthesis via salvage pathway; UMP from uracil: step 1/1. With respect to regulation, allosterically activated by GTP. Catalyzes the conversion of uracil and 5-phospho-alpha-D-ribose 1-diphosphate (PRPP) to UMP and diphosphate. The chain is Uracil phosphoribosyltransferase from Desulforapulum autotrophicum (strain ATCC 43914 / DSM 3382 / VKM B-1955 / HRM2) (Desulfobacterium autotrophicum).